A 611-amino-acid chain; its full sequence is Glutamine--fructose-6-phosphate aminotransferase [isomerizing] (611 aa).

Cys2 serves as the catalytic Nucleophile; for GATase activity. Residues 2–219 (CGIVGGVSKT…DGDVAMLQRQ (218 aa)) form the Glutamine amidotransferase type-2 domain. 2 SIS domains span residues 287-427 (AAAM…APGA) and 460-601 (WAAR…VDRP). Lys606 acts as the For Fru-6P isomerization activity in catalysis.

In terms of assembly, homodimer.

It is found in the cytoplasm. The enzyme catalyses D-fructose 6-phosphate + L-glutamine = D-glucosamine 6-phosphate + L-glutamate. In terms of biological role, catalyzes the first step in hexosamine metabolism, converting fructose-6P into glucosamine-6P using glutamine as a nitrogen source. The polypeptide is Glutamine--fructose-6-phosphate aminotransferase [isomerizing] (Acidithiobacillus ferridurans).